The sequence spans 301 residues: Probable 5-dehydro-4-deoxyglucarate dehydratase (301 aa).

It belongs to the DapA family.

It carries out the reaction 5-dehydro-4-deoxy-D-glucarate + H(+) = 2,5-dioxopentanoate + CO2 + H2O. Its pathway is carbohydrate acid metabolism; D-glucarate degradation; 2,5-dioxopentanoate from D-glucarate: step 2/2. The protein is Probable 5-dehydro-4-deoxyglucarate dehydratase of Chelativorans sp. (strain BNC1).